The chain runs to 269 residues: Formamidopyrimidine-DNA glycosylase (269 aa).

Proline 2 serves as the catalytic Schiff-base intermediate with DNA. The active-site Proton donor is glutamate 3. Residue lysine 57 is the Proton donor; for beta-elimination activity of the active site. Histidine 90, arginine 109, and lysine 150 together coordinate DNA. The segment at 235–269 adopts an FPG-type zinc-finger fold; the sequence is QVYGRKGEPCRVCGTPIVATKHAQRATFYCRHCQK. The active-site Proton donor; for delta-elimination activity is arginine 259.

Belongs to the FPG family. Monomer. Requires Zn(2+) as cofactor.

The catalysed reaction is Hydrolysis of DNA containing ring-opened 7-methylguanine residues, releasing 2,6-diamino-4-hydroxy-5-(N-methyl)formamidopyrimidine.. The enzyme catalyses 2'-deoxyribonucleotide-(2'-deoxyribose 5'-phosphate)-2'-deoxyribonucleotide-DNA = a 3'-end 2'-deoxyribonucleotide-(2,3-dehydro-2,3-deoxyribose 5'-phosphate)-DNA + a 5'-end 5'-phospho-2'-deoxyribonucleoside-DNA + H(+). Involved in base excision repair of DNA damaged by oxidation or by mutagenic agents. Acts as a DNA glycosylase that recognizes and removes damaged bases. Has a preference for oxidized purines, such as 7,8-dihydro-8-oxoguanine (8-oxoG). Has AP (apurinic/apyrimidinic) lyase activity and introduces nicks in the DNA strand. Cleaves the DNA backbone by beta-delta elimination to generate a single-strand break at the site of the removed base with both 3'- and 5'-phosphates. This chain is Formamidopyrimidine-DNA glycosylase, found in Salmonella choleraesuis (strain SC-B67).